The sequence spans 50 residues: C-C motif chemokine 5 (50 aa).

Belongs to the intercrine beta (chemokine CC) family.

Its subcellular location is the secreted. In terms of biological role, chemoattractant for blood monocytes, memory T-helper cells and eosinophils. Causes the release of histamine from basophils and activates eosinophils. May activate several chemokine receptors including CCR1, CCR3, CCR4 and CCR5. May also be an agonist of the G protein-coupled receptor GPR75. Together with GPR75, may play a role in neuron survival through activation of a downstream signaling pathway involving the PI3, Akt and MAP kinases. By activating GPR75 may also play a role in insulin secretion by islet cells. The chain is C-C motif chemokine 5 (CCL5) from Sus scrofa (Pig).